The following is a 1095-amino-acid chain: Solute carrier family 12 member 1 (1095 aa).

Residues 1–173 (MSVNIPSNSV…EEDVTGVVKF (173 aa)) lie on the Cytoplasmic side of the membrane. The RFXV motif motif lies at 16 to 19 (RFQV). A disordered region spans residues 26–45 (HGSGAAMSDSTDPPHYEETS). Phosphoserine is present on residues S57 and S87. Phosphothreonine is present on residues T91, T96, T101, and T114. S116 is subject to Phosphoserine. S126 carries the post-translational modification Phosphoserine; by AMPK. Phosphoserine is present on S144. Residues 174 to 194 (GWVKGVLVRCMLNIWGVMLFI) traverse the membrane as a helical segment. The Extracellular portion of the chain corresponds to 195–197 (RLS). The chain crosses the membrane as a helical span at residues 198–218 (WIVGEAGIGLGVIIIGLSVVV). Residues 219–255 (TTLTGISMSAICTNGVVRGGGAYYLISRSLGPEFGGS) lie on the Cytoplasmic side of the membrane. A helical transmembrane segment spans residues 256–276 (IGLIFRFANAVRVAMYVVGFA). Residues 277–298 (ETVVDLLKESDSMMVDPTNDIR) lie on the Extracellular side of the membrane. Residues 299-319 (IIGSITVVILLGISVAGMEWE) traverse the membrane as a helical segment. Topologically, residues 320-323 (AKAQ) are cytoplasmic. A helical membrane pass occupies residues 324 to 344 (VILLVILLIGIANFFIGTVIP). The Extracellular portion of the chain corresponds to 345–375 (SNNEKKSRGFFNYQASIFAENFGPSFTEGEG). The chain crosses the membrane as a helical span at residues 376–396 (FFSVFAIFFPAATGILAGANI). The Cytoplasmic segment spans residues 397–413 (SGDLEDPQDAIPRGTML). A helical transmembrane segment spans residues 414–434 (AIFITTVAYIGVAICVRACVV). At 435–546 (RDATGSMNDT…NNEPLRGYFL (112 aa)) the chain is on the extracellular side. 2 N-linked (GlcNAc...) asparagine glycosylation sites follow: N442 and N452. The next 2 helical transmembrane spans lie at 547–567 (TFVI…APII) and 568–588 (SNFF…ASYA). Over 589–605 (KSPGWRPAYGIYNMWVS) the chain is Extracellular. A helical transmembrane segment spans residues 606-626 (LFGAILCCAVMFVINWWAAVI). Residues 627-1095 (TYVIELFLYI…NHKNVLTFYS (469 aa)) are Cytoplasmic-facing.

This sequence belongs to the SLC12A transporter family. In terms of assembly, when phosphorylated, interacts with PPP3CB. Phosphorylated at Ser-87, Thr-96 and Thr-101 by OXSR1/OSR1 and STK39/SPAK downstream of WNK kinases (WNK1, WNK2, WNK3 or WNK4), promoting its activity. In terms of tissue distribution, expressed predominantly in kidney (at protein level).

Its subcellular location is the apical cell membrane. It catalyses the reaction K(+)(out) + 2 chloride(out) + Na(+)(out) = K(+)(in) + 2 chloride(in) + Na(+)(in). Activated following phosphorylation by OXSR1/OSR1 and STK39/SPAK downstream of WNK kinases (WNK1, WNK2, WNK3 or WNK4). Functionally, renal sodium, potassium and chloride ion cotransporter that mediates the transepithelial NaCl reabsorption in the thick ascending limb and plays an essential role in the urinary concentration and volume regulation. Electrically silent transporter system. The chain is Solute carrier family 12 member 1 (Slc12a1) from Rattus norvegicus (Rat).